Here is a 466-residue protein sequence, read N- to C-terminus: Hepatocyte nuclear factor 3-alpha (466 aa).

Positions 169 to 260 form a DNA-binding region, fork-head; sequence AKPPYSYISL…GNMFENGCYL (92 aa). Residues 251–288 form an essential for DNA binding region; that stretch reads GNMFENGCYLRRQKRFKCEKQPGAGGGSGGGGSKGVPE. A disordered region spans residues 269-358; sequence EKQPGAGGGS…ASSSAPPISS (90 aa). The span at 273–284 shows a compositional bias: gly residues; that stretch reads GAGGGSGGGGSK. 2 positions are modified to phosphoserine: serine 303 and serine 327. Low complexity-rich tracts occupy residues 318–328 and 344–358; these read GAPAPGPAASP and ELKS…PISS.

In terms of assembly, binds DNA as a monomer. Interacts with FOXA2. Interacts with NKX2-1. Interacts with HDAC7. Interacts with the histone H3-H4 heterodimer. Associates with nucleosomes containing histone H2A. Interacts with AR. Interacts with NR0B2. Liver.

It localises to the nucleus. Transcription factor that is involved in embryonic development, establishment of tissue-specific gene expression and regulation of gene expression in differentiated tissues. Is thought to act as a 'pioneer' factor opening the compacted chromatin for other proteins through interactions with nucleosomal core histones and thereby replacing linker histones at target enhancer and/or promoter sites. Binds DNA with the consensus sequence 5'-[AC]A[AT]T[AG]TT[GT][AG][CT]T[CT]-3'. Proposed to play a role in translating the epigenetic signatures into cell type-specific enhancer-driven transcriptional programs. Involved in glucose homeostasis; activates the GCG promoter. Involved in the development of multiple endoderm-derived organ systems such as the liver, pancreas, lungs and prostate; FOXA1 and FOXA2 seem to have at least in part redundant roles. Modulates the transcriptional activity of nuclear hormone receptors. Is required for maximal gene activation mediated by AR in the prostate. Negatively regulates AR transactivation via competition with coactivators such as NCOA2. Is involved in ESR1-mediated transcription. Involved in regulation of apoptosis. Involved in cell cycle regulation. Originally described as a transcription activator for a number of liver genes such as AFP, albumin, tyrosine aminotransferase, PEPCK, etc. Interacts with the cis-acting regulatory regions of these genes. The sequence is that of Hepatocyte nuclear factor 3-alpha (Foxa1) from Rattus norvegicus (Rat).